Here is a 505-residue protein sequence, read N- to C-terminus: UDP-N-acetylmuramate--L-alanine ligase (505 aa).

ATP is bound at residue 164–170; sequence GTHGKTT.

It belongs to the MurCDEF family.

It localises to the cytoplasm. It carries out the reaction UDP-N-acetyl-alpha-D-muramate + L-alanine + ATP = UDP-N-acetyl-alpha-D-muramoyl-L-alanine + ADP + phosphate + H(+). Its pathway is cell wall biogenesis; peptidoglycan biosynthesis. In terms of biological role, cell wall formation. This chain is UDP-N-acetylmuramate--L-alanine ligase, found in Synechocystis sp. (strain ATCC 27184 / PCC 6803 / Kazusa).